We begin with the raw amino-acid sequence, 459 residues long: Cysteine--tRNA ligase (459 aa).

Cys-31 is a Zn(2+) binding site. The short motif at 33–43 (PTVYDNPHIGN) is the 'HIGH' region element. Zn(2+)-binding residues include Cys-216, His-241, and Glu-245. Positions 274–278 (KMSKS) match the 'KMSKS' region motif. Lys-277 provides a ligand contact to ATP.

It belongs to the class-I aminoacyl-tRNA synthetase family. In terms of assembly, monomer. Requires Zn(2+) as cofactor.

It is found in the cytoplasm. The enzyme catalyses tRNA(Cys) + L-cysteine + ATP = L-cysteinyl-tRNA(Cys) + AMP + diphosphate. This is Cysteine--tRNA ligase from Rickettsia felis (strain ATCC VR-1525 / URRWXCal2) (Rickettsia azadi).